Reading from the N-terminus, the 431-residue chain is Gamma-glutamyl phosphate reductase (431 aa).

It belongs to the gamma-glutamyl phosphate reductase family.

The protein resides in the cytoplasm. The enzyme catalyses L-glutamate 5-semialdehyde + phosphate + NADP(+) = L-glutamyl 5-phosphate + NADPH + H(+). It functions in the pathway amino-acid biosynthesis; L-proline biosynthesis; L-glutamate 5-semialdehyde from L-glutamate: step 2/2. In terms of biological role, catalyzes the NADPH-dependent reduction of L-glutamate 5-phosphate into L-glutamate 5-semialdehyde and phosphate. The product spontaneously undergoes cyclization to form 1-pyrroline-5-carboxylate. In Bifidobacterium longum subsp. infantis (strain ATCC 15697 / DSM 20088 / JCM 1222 / NCTC 11817 / S12), this protein is Gamma-glutamyl phosphate reductase.